The following is a 167-amino-acid chain: Cytochrome b6-f complex subunit 4 (167 aa).

3 helical membrane-spanning segments follow: residues 36 to 56, 95 to 115, and 131 to 151; these read LLYISPVVILGTIACNVGLAV, LLGVLLMVLVPTGLLTVPFLE, and TVFLIGTAVALWLGIGATLPI.

It belongs to the cytochrome b family. PetD subfamily. The 4 large subunits of the cytochrome b6-f complex are cytochrome b6, subunit IV (17 kDa polypeptide, petD), cytochrome f and the Rieske protein, while the 4 small subunits are petG, petL, petM and petN. The complex functions as a dimer.

The protein resides in the plastid. It is found in the chloroplast thylakoid membrane. Functionally, component of the cytochrome b6-f complex, which mediates electron transfer between photosystem II (PSII) and photosystem I (PSI), cyclic electron flow around PSI, and state transitions. The sequence is that of Cytochrome b6-f complex subunit 4 from Calycanthus floridus var. glaucus (Eastern sweetshrub).